Reading from the N-terminus, the 611-residue chain is Putative type II restriction enzyme HgiDII (611 aa).

Over residues 355 to 364 the composition is skewed to basic and acidic residues; the sequence is YPSNPKKEEV. The disordered stretch occupies residues 355 to 434; it reads YPSNPKKEEV…PEPSPPPKQE (80 aa). Low complexity predominate over residues 381–409; sequence TNASSDSSTATENASSDSSTATENASSET. 2 tandem repeats follow at residues 382–392 and 393–403. The interval 382-403 is 2.5 X 11 AA tandem repeats; the sequence is NASSDSSTATENASSDSSTATE. The stretch at 404-409 is one 3; truncated repeat; the sequence is NASSET. Residues 410–425 show a composition bias toward acidic residues; the sequence is NDGEVEDNSFFDDDIP.

It catalyses the reaction Endonucleolytic cleavage of DNA to give specific double-stranded fragments with terminal 5'-phosphates.. In terms of biological role, according to REBASE this is a P subtype restriction enzyme that recognizes the double-stranded sequence 5'-GTCGAC-3' and cleaves after G-1. No restriction activity was detected upon overexpressing this protein in E.coli. The polypeptide is Putative type II restriction enzyme HgiDII (Herpetosiphon aurantiacus (Herpetosiphon giganteus)).